A 184-amino-acid chain; its full sequence is Ribosome maturation factor RimM (184 aa).

Residues 112–184 (TDSYYWIDLI…SNKTISLDWQ (73 aa)) enclose the PRC barrel domain.

The protein belongs to the RimM family. In terms of assembly, binds ribosomal protein uS19.

It is found in the cytoplasm. In terms of biological role, an accessory protein needed during the final step in the assembly of 30S ribosomal subunit, possibly for assembly of the head region. Essential for efficient processing of 16S rRNA. May be needed both before and after RbfA during the maturation of 16S rRNA. It has affinity for free ribosomal 30S subunits but not for 70S ribosomes. The sequence is that of Ribosome maturation factor RimM from Polynucleobacter necessarius subsp. necessarius (strain STIR1).